The primary structure comprises 157 residues: Class 10 plant pathogenesis-related protein 2F (157 aa).

Aspartate 8 serves as a coordination point for trans-zeatin. Positions 32, 35, and 38 each coordinate Ca(2+). Glutamate 60, histidine 69, tyrosine 81, and tyrosine 83 together coordinate trans-zeatin.

This sequence belongs to the BetVI family.

It localises to the cytoplasm. It is found in the cytosol. Class II ribonuclease (RNase). Binds to cytokinins. Interacts with melatonin. In Lupinus luteus (European yellow lupine), this protein is Class 10 plant pathogenesis-related protein 2F.